The sequence spans 295 residues: Bifunctional protein FolD (295 aa).

Residues 166-168, S195, and I236 contribute to the NADP(+) site; that span reads GRS.

Belongs to the tetrahydrofolate dehydrogenase/cyclohydrolase family. In terms of assembly, homodimer.

It carries out the reaction (6R)-5,10-methylene-5,6,7,8-tetrahydrofolate + NADP(+) = (6R)-5,10-methenyltetrahydrofolate + NADPH. The catalysed reaction is (6R)-5,10-methenyltetrahydrofolate + H2O = (6R)-10-formyltetrahydrofolate + H(+). Its pathway is one-carbon metabolism; tetrahydrofolate interconversion. Its function is as follows. Catalyzes the oxidation of 5,10-methylenetetrahydrofolate to 5,10-methenyltetrahydrofolate and then the hydrolysis of 5,10-methenyltetrahydrofolate to 10-formyltetrahydrofolate. The chain is Bifunctional protein FolD from Prosthecochloris aestuarii (strain DSM 271 / SK 413).